The sequence spans 618 residues: Medium-chain acyl-CoA ligase ACSF2, mitochondrial (618 aa).

Residues 1 to 44 (MRATAAYVGMLRLGRMCAGSPGVLGARAALSRSWQEARLQAVRF) constitute a mitochondrion transit peptide. Lys182 bears the N6-acetyllysine mark. Lys185 bears the N6-acetyllysine; alternate mark. Lys185 bears the N6-succinyllysine; alternate mark. Residue 266–274 (TSGTTGSPK) participates in ATP binding. Residues Lys343 and Lys401 each carry the N6-acetyllysine modification. Residue Lys481 is modified to N6-succinyllysine. ATP-binding residues include Asp496 and Arg511. Position 513 is an N6-acetyllysine (Lys513). Residues Lys547 and Lys573 each carry the N6-acetyllysine; alternate modification. 2 positions are modified to N6-succinyllysine; alternate: Lys547 and Lys573. Lys602 lines the ATP pocket. N6-succinyllysine is present on Lys602.

It belongs to the ATP-dependent AMP-binding enzyme family.

It is found in the mitochondrion. It catalyses the reaction a medium-chain fatty acid + ATP + CoA = a medium-chain fatty acyl-CoA + AMP + diphosphate. The catalysed reaction is octanoate + ATP + CoA = octanoyl-CoA + AMP + diphosphate. Its function is as follows. Acyl-CoA synthases catalyze the initial reaction in fatty acid metabolism, by forming a thioester with CoA. Has some preference toward medium-chain substrates. Plays a role in adipocyte differentiation. In Macaca fascicularis (Crab-eating macaque), this protein is Medium-chain acyl-CoA ligase ACSF2, mitochondrial.